Reading from the N-terminus, the 718-residue chain is DNA ligase (718 aa).

Residues 34–38 (DAEYD), 83–84 (SL), and glutamate 115 each bind NAD(+). Lysine 117 functions as the N6-AMP-lysine intermediate in the catalytic mechanism. The NAD(+) site is built by arginine 138, glutamate 186, lysine 302, and lysine 326. Residues cysteine 420, cysteine 423, cysteine 438, and cysteine 444 each contribute to the Zn(2+) site. Positions 604-694 (PKGDALAGKT…DRSAPAASNN (91 aa)) constitute a BRCT domain.

Belongs to the NAD-dependent DNA ligase family. LigA subfamily. Mg(2+) is required as a cofactor. It depends on Mn(2+) as a cofactor.

It carries out the reaction NAD(+) + (deoxyribonucleotide)n-3'-hydroxyl + 5'-phospho-(deoxyribonucleotide)m = (deoxyribonucleotide)n+m + AMP + beta-nicotinamide D-nucleotide.. In terms of biological role, DNA ligase that catalyzes the formation of phosphodiester linkages between 5'-phosphoryl and 3'-hydroxyl groups in double-stranded DNA using NAD as a coenzyme and as the energy source for the reaction. It is essential for DNA replication and repair of damaged DNA. The chain is DNA ligase from Roseiflexus castenholzii (strain DSM 13941 / HLO8).